Consider the following 27-residue polypeptide: Zinc metalloproteinase multactivase catalytic subunit (27 aa).

A Peptidase M12B domain is found at 12–27; that stretch reads FIELVIIVDHSXXTYK. Glu-14 provides a ligand contact to Ca(2+).

It belongs to the venom metalloproteinase (M12B) family. P-III subfamily. P-IIId sub-subfamily. As to quaternary structure, heterodimer of a metalloproteinase subunit and a regulatory subunit comprising two homologous disulfide-linked lectins (AC P81798). The cofactor is Zn(2+). Expressed by the venom gland.

It is found in the secreted. This carinactivase-like calcium-dependent prothrombin (F2) activator activates prothrombin via recognition of the calcium ion bound conformation of its gamma-carboxyglutamic acid (GLA) domain, and the subsequent conversion of prothrombin to active thrombin is catalyzed by the catalytic subunit. The chain is Zinc metalloproteinase multactivase catalytic subunit from Echis multisquamatus (Central Asian sand viper).